A 112-amino-acid chain; its full sequence is MKQVIIVRSDLKMGKGKIAAQACHASIGSFKRTEEDKIRKWELEGSKKVIVSVNSLDELLEIYRAVKEAGISNYLVRDAGHTQIPAGTITCLGIGPDDDEKIDKITGDLKLL.

This sequence belongs to the PTH2 family.

It is found in the cytoplasm. It catalyses the reaction an N-acyl-L-alpha-aminoacyl-tRNA + H2O = an N-acyl-L-amino acid + a tRNA + H(+). Functionally, the natural substrate for this enzyme may be peptidyl-tRNAs which drop off the ribosome during protein synthesis. This chain is Peptidyl-tRNA hydrolase, found in Methanothermobacter thermautotrophicus (strain ATCC 29096 / DSM 1053 / JCM 10044 / NBRC 100330 / Delta H) (Methanobacterium thermoautotrophicum).